Consider the following 198-residue polypeptide: Leucine-rich melanocyte differentiation-associated protein (198 aa).

4 LRR repeats span residues Glu-2–Ser-22, Ser-26–Pro-47, Arg-48–Leu-69, and Ala-75–Glu-95. One can recognise an LRRCT domain in the interval Lys-96–Arg-134.

In the embryo, expressed in melanoblasts. In the fetus, expressed in melanocytes. Not detected in retinal pigment epithelial cells.

Required for melanocyte differentiation. The protein is Leucine-rich melanocyte differentiation-associated protein of Homo sapiens (Human).